The sequence spans 237 residues: MNVNYLNDSDLDFLQHCSEEQLANFARLLTHNEKGKTRLSSVLMRNELFKSMEGHPEQHRRNWQLIAGELQHFGGDSIANKLRGHGKLYRAILLDVSKRLKLKADKEMSTFEIEQQLLEQFLRNTWKKMDEEHKQEFLHAVDARVNELEELLPLLMKDKLLAKGVSHLLSSQLTRILRTHAAMSVLGHGLLRGAGLGGPVGAALNGVKAVSGSSYRVTIPAVLQIACLRRMVSATQV.

The protein belongs to the UPF0174 family.

The polypeptide is UPF0174 protein YaaW (Escherichia coli O157:H7).